Consider the following 176-residue polypeptide: ATP-dependent protease subunit HslV (176 aa).

Thr2 is a catalytic residue. Na(+)-binding residues include Gly157, Cys160, and Thr163.

This sequence belongs to the peptidase T1B family. HslV subfamily. A double ring-shaped homohexamer of HslV is capped on each side by a ring-shaped HslU homohexamer. The assembly of the HslU/HslV complex is dependent on binding of ATP.

It localises to the cytoplasm. The catalysed reaction is ATP-dependent cleavage of peptide bonds with broad specificity.. Its activity is regulated as follows. Allosterically activated by HslU binding. Functionally, protease subunit of a proteasome-like degradation complex believed to be a general protein degrading machinery. The polypeptide is ATP-dependent protease subunit HslV (Pseudomonas putida (strain ATCC 47054 / DSM 6125 / CFBP 8728 / NCIMB 11950 / KT2440)).